Reading from the N-terminus, the 407-residue chain is Probable peptidoglycan glycosyltransferase FtsW (407 aa).

The Cytoplasmic portion of the chain corresponds to 1-25 (MSIDFRNIIKPYPSPIITGRGIDLD). The helical transmembrane segment at 26–46 (FPMLAGCLALLGLGLVMITSA) threads the bilayer. Residues 47–65 (SSEVAAVQSGNTLYMMIRH) lie on the Periplasmic side of the membrane. The helical transmembrane segment at 66–86 (LVYLVIGLGACIVTMMIPIAT) threads the bilayer. The Cytoplasmic portion of the chain corresponds to 87 to 89 (WQR). The chain crosses the membrane as a helical span at residues 90–110 (LGWLMLIGAFGLLIMVILPGI). Over 111–119 (GREVNGSMR) the chain is Periplasmic. The helical transmembrane segment at 120-140 (WIGFGAFNVQPSEIAKVFVVI) threads the bilayer. The Cytoplasmic portion of the chain corresponds to 141 to 155 (YLAGYLVRRQKEVRE). Residues 156–176 (SWMGFFKPFIVLLPMAGLLLM) form a helical membrane-spanning segment. The Periplasmic portion of the chain corresponds to 177-181 (EPDFG). Residues 182 to 202 (ATVVMMGAAAAMLFLGGVGLF) traverse the membrane as a helical segment. Residue Arg203 is a topological domain, cytoplasmic. Residues 204–224 (FTLMVVLAVAAVTVLVQAQPY) form a helical membrane-spanning segment. Over 225–283 (RMARLITFTDPWSDQFGSGYQLTQALIAFGRGEWLGVGLGNSVQKQFYLPEAHTDFVFS) the chain is Periplasmic. A helical membrane pass occupies residues 284–304 (VLAEELGVVGSLCTVALFVFV). Residues 305–321 (CVRGMYIGMWAEKAKQY) are Cytoplasmic-facing. A helical membrane pass occupies residues 322 to 342 (FAAYVAYGLSFLWIGQFLINI). Topologically, residues 343–355 (GVNVGLLPTKGLT) are periplasmic. A helical membrane pass occupies residues 356–376 (LPFLSYGGSSLVICCACLGLL). Residues 377-407 (LRIEWESRTHLGSEEMEFSESDFAEEPTHGR) are Cytoplasmic-facing.

This sequence belongs to the SEDS family. FtsW subfamily.

It is found in the cell inner membrane. It carries out the reaction [GlcNAc-(1-&gt;4)-Mur2Ac(oyl-L-Ala-gamma-D-Glu-L-Lys-D-Ala-D-Ala)](n)-di-trans,octa-cis-undecaprenyl diphosphate + beta-D-GlcNAc-(1-&gt;4)-Mur2Ac(oyl-L-Ala-gamma-D-Glu-L-Lys-D-Ala-D-Ala)-di-trans,octa-cis-undecaprenyl diphosphate = [GlcNAc-(1-&gt;4)-Mur2Ac(oyl-L-Ala-gamma-D-Glu-L-Lys-D-Ala-D-Ala)](n+1)-di-trans,octa-cis-undecaprenyl diphosphate + di-trans,octa-cis-undecaprenyl diphosphate + H(+). It participates in cell wall biogenesis; peptidoglycan biosynthesis. In terms of biological role, peptidoglycan polymerase that is essential for cell division. This Pseudomonas fluorescens (strain SBW25) protein is Probable peptidoglycan glycosyltransferase FtsW.